Reading from the N-terminus, the 334-residue chain is MGRRSSDTEEESRSKRKKKHRRRSSSSSSSDSRTYSRKKGGRKSRSKSRSWSRDLQPRSHSYDRRRRHRSSSSSSYGSRRKRSRSRSRGRGKSYRVQRSRSKSRTRRSRSRPRLRSHSRSSERSSHRRTRSRSRDRERRKGRDKEKREKEKDKGKDKELHNIKRGESGNIKAGLEHLPPAEQAKARLQLVLEAAAKADEALKAKERNEEEAKRRKEEDQATLVEQVKRVKEIEAIESDSFVQQTFRSSKEVKKSVEPSEVKQATSTSGPASAVADPPSTEKEIDPTSIPTAIKYQDDNSLAHPNLFIEKADAEEKWFKRLIALRQERLMGSPVA.

Residues 1–13 (MGRRSSDTEEESR) show a composition bias toward basic and acidic residues. Disordered stretches follow at residues 1-179 (MGRR…HLPP), 201-220 (LKAK…EDQA), and 243-290 (QTFR…SIPT). Basic residues-rich tracts occupy residues 14-24 (SKRKKKHRRRS) and 35-50 (YSRK…KSRS). Residues 51-62 (WSRDLQPRSHSY) are compositionally biased toward basic and acidic residues. The span at 78–118 (SRRKRSRSRSRGRGKSYRVQRSRSKSRTRRSRSRPRLRSHS) shows a compositional bias: basic residues. Basic and acidic residues-rich tracts occupy residues 132-166 (RSRD…KRGE), 201-218 (LKAK…KEED), and 247-259 (SSKE…EPSE). Residues 180–236 (AEQAKARLQLVLEAAAKADEALKAKERNEEEAKRRKEEDQATLVEQVKRVKEIEAIE) adopt a coiled-coil conformation.

Interacts (via Arg/Ser-rich domain) with LUC7L3, RBM39 and RSF1. Phosphorylated. Widely expressed. Expressed in brain, spinal cord, cerebellum.

It is found in the nucleus. Its subcellular location is the nucleus speckle. The protein localises to the cytoplasm. In terms of biological role, has a role in alternative splicing and transcription regulation. Involved in both constitutive and alternative pre-mRNA splicing. May have a role in the recognition of the 3' splice site during the second step of splicing. The polypeptide is Serine/Arginine-related protein 53 (RSRC1) (Homo sapiens (Human)).